Here is an 89-residue protein sequence, read N- to C-terminus: Late cornified envelope protein 3A (89 aa).

Composition is skewed to low complexity over residues 1–10 and 17–46; these read MSCQQNQQQC and PAKSPAQCLPPASSSCAPSSGGCGPSSERS. Disordered stretches follow at residues 1–46 and 62–89; these read MSCQ…SERS and CQSSNSCDRGSGQQGGSSSCGHSSAGCC.

This sequence belongs to the LCE family. In terms of assembly, interacts with CYSRT1; the interaction is direct. Skin-specific. Expression was readily detected in adult trunk skin, adult arm skin, fetal skin, penal skin, vulva, esophagus and tongue. Not expressed in the cervix, rectum, lung, colon, or placenta.

Functionally, a structural component of the cornified envelope of the stratum corneum involved in innate cutaneous host defense. Possesses defensin-like antimicrobial activity against a broad spectrum of Gram-positive and Gram-negative bacteria, both aerobic and anaerobic species. Upon inflammation, may regulate skin barrier repair by shaping cutaneous microbiota composition and immune response to bacterial antigens. The protein is Late cornified envelope protein 3A of Homo sapiens (Human).